The following is a 712-amino-acid chain: Elongation factor G (712 aa).

In terms of domain architecture, tr-type G spans 8 to 290; sequence TRYRNIGISA…AVIEFLPSPT (283 aa). GTP contacts are provided by residues 17–24, 88–92, and 142–145; these read AHIDAGKT, DTPGH, and NKMD.

Belongs to the TRAFAC class translation factor GTPase superfamily. Classic translation factor GTPase family. EF-G/EF-2 subfamily.

It is found in the cytoplasm. In terms of biological role, catalyzes the GTP-dependent ribosomal translocation step during translation elongation. During this step, the ribosome changes from the pre-translocational (PRE) to the post-translocational (POST) state as the newly formed A-site-bound peptidyl-tRNA and P-site-bound deacylated tRNA move to the P and E sites, respectively. Catalyzes the coordinated movement of the two tRNA molecules, the mRNA and conformational changes in the ribosome. The polypeptide is Elongation factor G (Acinetobacter baumannii (strain AB307-0294)).